A 716-amino-acid chain; its full sequence is Leucine-rich repeat neuronal protein 1 (716 aa).

The first 25 residues, 1–25 (MARMSFVLAAYQMVLSLLMTSLTGS), serve as a signal peptide directing secretion. One can recognise an LRRNT domain in the interval 26-72 (SLQSSECPQLCVCEIRPWFTPQSTYREATTVDCNDLRLTRIPSNLSS). Topologically, residues 26–631 (SLQSSECPQL…DISDQETSTA (606 aa)) are extracellular. N69 is a glycosylation site (N-linked (GlcNAc...) asparagine). LRR repeat units follow at residues 73-95 (DTQV…QQLF), 96-117 (NLTE…GLAN), 120-141 (QLTT…CLQD), 144-165 (NLQE…AFSG), 168-189 (NLLR…WFDS), 192-213 (NLEI…NFKP), 216-237 (NLRS…ALVG), 240-261 (SLES…ALQK), and 264-285 (NLKF…DFKN). N-linked (GlcNAc...) asparagine glycosylation is found at N96, N106, and N117. Positions 371–424 (NPLRCDCVIHWINSNKTNIRFMEPLSMFCAMPPEYRGQQVKEVLIQDSSEQCLP) constitute an LRRCT domain. N385 carries N-linked (GlcNAc...) asparagine glycosylation. In terms of domain architecture, Ig-like C2-type spans 424–515 (PMISHDTFPN…GADTRVVMIK (92 aa)). An intrachain disulfide couples C447 to C499. N-linked (GlcNAc...) asparagine glycans are attached at residues N517, N582, and N611. A Fibronectin type-III domain is found at 525-617 (QVLKIYVKQT…SCVNVTTKNA (93 aa)). Residues 632–652 (LAAVMGSMFAVISLASIAVYI) traverse the membrane as a helical segment. Residues 653–716 (AKRFKRKNYH…VDTSRSYYMW (64 aa)) lie on the Cytoplasmic side of the membrane. A compositionally biased stretch (basic and acidic residues) spans 691 to 700 (DSEKDKDGTA). A disordered region spans residues 691-716 (DSEKDKDGTADTKPTQVDTSRSYYMW). The span at 702-716 (TKPTQVDTSRSYYMW) shows a compositional bias: polar residues.

The protein localises to the membrane. The protein is Leucine-rich repeat neuronal protein 1 (LRRN1) of Bos taurus (Bovine).